A 156-amino-acid polypeptide reads, in one-letter code: Small ribosomal subunit protein uS7 (156 aa).

It belongs to the universal ribosomal protein uS7 family. In terms of assembly, part of the 30S ribosomal subunit. Contacts proteins S9 and S11.

One of the primary rRNA binding proteins, it binds directly to 16S rRNA where it nucleates assembly of the head domain of the 30S subunit. Is located at the subunit interface close to the decoding center, probably blocks exit of the E-site tRNA. The chain is Small ribosomal subunit protein uS7 from Pseudomonas fluorescens (strain ATCC BAA-477 / NRRL B-23932 / Pf-5).